The following is a 375-amino-acid chain: MISSRCKNIKPSAIREIFNLATSDCINLGIGEPDFDTPKHIIEAAKRALDEGKTHYSPNNGIPELREEISNKLKDDYNLDVDKDNIIVTCGASEALMLSIMTLIDRGDEVLIPNPSFVSYFSLTEFAEGKIKNIDLDENFNIDLEKVKESITKKTKLIIFNSPSNPTGKVYDKETIKGLAEIAEDYNLIIVSDEVYDKIIYDKKHYSPMQFTDRCILINGFSKTYAMTGWRIGYLAVSDELNKELDLINNMIKIHQYSFACATTFAQYGALAALRGSQKCVEDMVREFKMRRDLIYNGLKDIFKVNKPDGAFYIFPDVSEYGDGVEVAKKLIENKVLCVPGVAFGENGANYIRFSYATKYEDIEKALGIIKEIFE.

L-aspartate is bound by residues G31 and N165. N6-(pyridoxal phosphate)lysine is present on K223. Position 353 (R353) interacts with L-aspartate.

The protein belongs to the class-I pyridoxal-phosphate-dependent aminotransferase family. In terms of assembly, homodimer. Pyridoxal 5'-phosphate serves as cofactor.

It localises to the cytoplasm. The catalysed reaction is L-aspartate + 2-oxoglutarate = oxaloacetate + L-glutamate. This is Probable aspartate aminotransferase from Methanocaldococcus jannaschii (strain ATCC 43067 / DSM 2661 / JAL-1 / JCM 10045 / NBRC 100440) (Methanococcus jannaschii).